The chain runs to 254 residues: 3-dehydroquinate dehydratase (254 aa).

3-dehydroquinate contacts are provided by residues 47 to 49 (EFR) and Arg83. Residue His144 is the Proton donor/acceptor of the active site. The Schiff-base intermediate with substrate role is filled by Lys171. Positions 213, 232, and 236 each coordinate 3-dehydroquinate.

It belongs to the type-I 3-dehydroquinase family. In terms of assembly, homodimer.

It carries out the reaction 3-dehydroquinate = 3-dehydroshikimate + H2O. It functions in the pathway metabolic intermediate biosynthesis; chorismate biosynthesis; chorismate from D-erythrose 4-phosphate and phosphoenolpyruvate: step 3/7. Involved in the third step of the chorismate pathway, which leads to the biosynthesis of aromatic amino acids. Catalyzes the cis-dehydration of 3-dehydroquinate (DHQ) and introduces the first double bond of the aromatic ring to yield 3-dehydroshikimate. The polypeptide is 3-dehydroquinate dehydratase (Neisseria gonorrhoeae (strain ATCC 700825 / FA 1090)).